The primary structure comprises 563 residues: Inositol-3-phosphate synthase 1-B (563 aa).

Belongs to the myo-inositol 1-phosphate synthase family. NAD(+) is required as a cofactor.

Its subcellular location is the cytoplasm. The catalysed reaction is D-glucose 6-phosphate = 1D-myo-inositol 3-phosphate. Its pathway is polyol metabolism; myo-inositol biosynthesis; myo-inositol from D-glucose 6-phosphate: step 1/2. Key enzyme in myo-inositol biosynthesis pathway that catalyzes the conversion of glucose 6-phosphate to 1-myo-inositol 1-phosphate in a NAD-dependent manner. Rate-limiting enzyme in the synthesis of all inositol-containing compounds. The protein is Inositol-3-phosphate synthase 1-B (isyna1-b) of Xenopus laevis (African clawed frog).